We begin with the raw amino-acid sequence, 520 residues long: Cyclic AMP-responsive element-binding protein 3-like protein 2 (520 aa).

Residues 1–378 (MEVLESGEQG…CKLAGTQTGT (378 aa)) are Cytoplasmic-facing. A Phosphoserine modification is found at serine 93. Lysine 178 participates in a covalent cross-link: Glycyl lysine isopeptide (Lys-Gly) (interchain with G-Cter in SUMO2). Serine 191 is subject to Phosphoserine. A disordered region spans residues 195–264 (APVDHLHLPP…PHKLQGSGPL (70 aa)). Low complexity-rich tracts occupy residues 208–220 (SSHG…SLSP) and 234–255 (SPSR…LTAP). The bZIP domain maps to 294–357 (ALKKIRRKIK…RTLLQQLQKL (64 aa)). The basic motif stretch occupies residues 296-325 (KKIRRKIKNKISAQESRRKKKEYMDSLEKK). The leucine-zipper stretch occupies residues 336 to 357 (LRKKVEVLENTNRTLLQQLQKL). Residues 379–399 (CLMVVVLCFAVAFGSFFQGYG) traverse the membrane as a helical; Signal-anchor for type II membrane protein segment. The Lumenal portion of the chain corresponds to 400–520 (PYPSATKMAL…ELDRRVNTTF (121 aa)). An S1P recognition motif is present at residues 427–430 (RNLL). 3 N-linked (GlcNAc...) asparagine glycosylation sites follow: asparagine 480, asparagine 504, and asparagine 517.

This sequence belongs to the bZIP family. ATF subfamily. Binds DNA as a dimer. Post-translationally, upon ER stress, translocated to the Golgi apparatus, where it is processed by regulated intramembrane proteolysis (RIP) to release the cytosol-facing N-terminal transcription factor domain. The cleavage is performed sequentially by site-1 and site-2 proteases (S1P/MBTPS1 and S2P/MBTPS2). In terms of processing, N-glycosylated. Ubiquitinated by HRD1/SYVN1; undergoes 'Lys-48'-linked ubiquitination, followed by rapid proteasomal degradation under normal conditions. Upon ER stress, SYVN1 E3 ubiquitin-protein ligase dissociates from its substrate, ubiquitination does not occur and CREB3L2 is stabilized.

It is found in the endoplasmic reticulum membrane. It localises to the nucleus. Transcription factor involved in unfolded protein response (UPR). In the absence of endoplasmic reticulum (ER) stress, inserted into ER membranes, with N-terminal DNA-binding and transcription activation domains oriented toward the cytosolic face of the membrane. In response to ER stress, transported to the Golgi, where it is cleaved in a site-specific manner by resident proteases S1P/MBTPS1 and S2P/MBTPS2. The released N-terminal cytosolic domain is translocated to the nucleus to effect transcription of specific target genes. Plays a critical role in chondrogenesis by activating the transcription of SEC23A, which promotes the transport and secretion of cartilage matrix proteins, and possibly that of ER biogenesis-related genes. In a neuroblastoma cell line, protects cells from ER stress-induced death. In vitro activates transcription of target genes via direct binding to the CRE site. This is Cyclic AMP-responsive element-binding protein 3-like protein 2 (CREB3L2) from Pongo abelii (Sumatran orangutan).